The following is a 98-amino-acid chain: Putative defensin-like protein 233 (98 aa).

An N-terminal signal peptide occupies residues Met1 to Ala28. Disulfide bonds link Cys35-Cys96, Cys45-Cys70, Cys53-Cys86, and Cys68-Cys88.

It belongs to the DEFL family. In terms of tissue distribution, expressed at least in stem, root, rosette leaves and flower buds.

The protein resides in the secreted. The chain is Putative defensin-like protein 233 (SCRL22) from Arabidopsis thaliana (Mouse-ear cress).